A 359-amino-acid chain; its full sequence is Membrane-bound lytic murein transglycosylase C (359 aa).

The signal sequence occupies residues 1–16 (MKKYLALALIAPLLIS). Cys-17 carries N-palmitoyl cysteine lipidation. The S-diacylglycerol cysteine moiety is linked to residue Cys-17.

It belongs to the transglycosylase Slt family.

The protein localises to the cell outer membrane. The catalysed reaction is Exolytic cleavage of the (1-&gt;4)-beta-glycosidic linkage between N-acetylmuramic acid (MurNAc) and N-acetylglucosamine (GlcNAc) residues in peptidoglycan, from either the reducing or the non-reducing ends of the peptidoglycan chains, with concomitant formation of a 1,6-anhydrobond in the MurNAc residue.. Functionally, murein-degrading enzyme. May play a role in recycling of muropeptides during cell elongation and/or cell division. In Escherichia coli O81 (strain ED1a), this protein is Membrane-bound lytic murein transglycosylase C.